The chain runs to 478 residues: NADH-quinone oxidoreductase subunit N (478 aa).

The next 14 helical transmembrane spans lie at 5–25 (LASP…VGVA), 37–57 (MLTL…ALGL), 68–88 (FAVM…VLSL), 99–119 (FEFP…VSAS), 121–141 (FMTL…LAAF), 156–176 (FVLG…IYGF), 199–219 (LTVG…AAPF), 231–251 (PTPV…AMML), 268–288 (VVAL…IGQT), 293–313 (LMAY…AAGS), 320–340 (LLIY…CILA), 365–385 (ALLL…SGFF), 401–421 (LLWG…YYYL), and 446–466 (VVAV…APIL).

The protein belongs to the complex I subunit 2 family. As to quaternary structure, NDH-1 is composed of 14 different subunits. Subunits NuoA, H, J, K, L, M, N constitute the membrane sector of the complex.

It localises to the cell inner membrane. It carries out the reaction a quinone + NADH + 5 H(+)(in) = a quinol + NAD(+) + 4 H(+)(out). NDH-1 shuttles electrons from NADH, via FMN and iron-sulfur (Fe-S) centers, to quinones in the respiratory chain. The immediate electron acceptor for the enzyme in this species is believed to be ubiquinone. Couples the redox reaction to proton translocation (for every two electrons transferred, four hydrogen ions are translocated across the cytoplasmic membrane), and thus conserves the redox energy in a proton gradient. This is NADH-quinone oxidoreductase subunit N from Granulibacter bethesdensis (strain ATCC BAA-1260 / CGDNIH1).